The primary structure comprises 68 residues: Large ribosomal subunit protein bL31 (68 aa).

Zn(2+) is bound by residues C17, C19, C37, and C40.

Belongs to the bacterial ribosomal protein bL31 family. Type A subfamily. As to quaternary structure, part of the 50S ribosomal subunit. Requires Zn(2+) as cofactor.

Functionally, binds the 23S rRNA. The polypeptide is Large ribosomal subunit protein bL31 (Dehalococcoides mccartyi (strain ATCC BAA-2266 / KCTC 15142 / 195) (Dehalococcoides ethenogenes (strain 195))).